A 350-amino-acid polypeptide reads, in one-letter code: Protein RecA (350 aa).

68–75 (GPESSGKT) serves as a coordination point for ATP.

Belongs to the RecA family.

It is found in the cytoplasm. In terms of biological role, can catalyze the hydrolysis of ATP in the presence of single-stranded DNA, the ATP-dependent uptake of single-stranded DNA by duplex DNA, and the ATP-dependent hybridization of homologous single-stranded DNAs. It interacts with LexA causing its activation and leading to its autocatalytic cleavage. This is Protein RecA from Symbiobacterium thermophilum (strain DSM 24528 / JCM 14929 / IAM 14863 / T).